We begin with the raw amino-acid sequence, 305 residues long: Taste receptor type 2 member 13 (305 aa).

Over 1–7 (MGSSLYD) the chain is Extracellular. The helical transmembrane segment at 8–28 (ILTIVMIAEFIFGNVTNGFIV) threads the bilayer. The Cytoplasmic portion of the chain corresponds to 29-42 (LTNCIAWLSKRTLS). A helical membrane pass occupies residues 43–63 (FIGWIQLFLAISRVVLIWEML). At 64–88 (LAWLKYMKYSFSYLAGTELRVMMLT) the chain is on the extracellular side. The helical transmembrane segment at 89–109 (WVVSNHFSLWLATILSIFYLL) threads the bilayer. Over 110 to 128 (KIASFSRPVFLYLKWRVKK) the chain is Cytoplasmic. A helical transmembrane segment spans residues 129–149 (VLLLILLGNLIFLMFNILQIN). The Extracellular segment spans residues 150–182 (THIEDWMDQYKRNITWDSRVNEFVGFSNLVLLE). Asn162 is a glycosylation site (N-linked (GlcNAc...) asparagine). A helical membrane pass occupies residues 183–203 (MIMFSVTPFTVALVSFILLIF). Over 204–232 (SLWKHLQKMHLSSRGERDPSTKAHVNALR) the chain is Cytoplasmic. A helical membrane pass occupies residues 233–253 (IMVSFLLLYATYFISFFISLI). Over 254–262 (PMAHKKGLD) the chain is Extracellular. The helical transmembrane segment at 263–283 (LMFSLTVGLFYPSSHSFILIL) threads the bilayer. The Cytoplasmic segment spans residues 284–305 (GHSNLRHSSCLVITYLRCKEKD).

Belongs to the G-protein coupled receptor T2R family. Expressed in subsets of taste receptor cells of the tongue and palate epithelium and exclusively in gustducin-positive cells. Expressed in 15% taste bud cells in circumvallate and foliate papillae but only in 2% in fungiform papillae. Expressed in the duodenum, antrum and fundus (part of the stomach).

The protein resides in the membrane. Functionally, receptor that may play a role in the perception of bitterness and is gustducin-linked. May play a role in sensing the chemical composition of the gastrointestinal content. The activity of this receptor may stimulate alpha gustducin, mediate PLC-beta-2 activation and lead to the gating of TRPM5. In Rattus norvegicus (Rat), this protein is Taste receptor type 2 member 13 (Tas2r13).